The sequence spans 216 residues: Small ribosomal subunit protein uS3 (216 aa).

Residues 20–91 form the KH type-2 domain; that stretch reads LKEFFEKALV…SVEIVVEKVH (72 aa).

It belongs to the universal ribosomal protein uS3 family.

This is Small ribosomal subunit protein uS3 (RPS3) from Encephalitozoon cuniculi (strain GB-M1) (Microsporidian parasite).